A 432-amino-acid chain; its full sequence is Enolase (432 aa).

Glutamine 166 provides a ligand contact to (2R)-2-phosphoglycerate. The active-site Proton donor is the glutamate 208. Mg(2+)-binding residues include aspartate 245, glutamate 291, and aspartate 318. Residues lysine 343, arginine 372, serine 373, and lysine 394 each contribute to the (2R)-2-phosphoglycerate site. Catalysis depends on lysine 343, which acts as the Proton acceptor.

Belongs to the enolase family. Requires Mg(2+) as cofactor.

Its subcellular location is the cytoplasm. The protein resides in the secreted. It is found in the cell surface. The catalysed reaction is (2R)-2-phosphoglycerate = phosphoenolpyruvate + H2O. Its pathway is carbohydrate degradation; glycolysis; pyruvate from D-glyceraldehyde 3-phosphate: step 4/5. Catalyzes the reversible conversion of 2-phosphoglycerate (2-PG) into phosphoenolpyruvate (PEP). It is essential for the degradation of carbohydrates via glycolysis. The chain is Enolase from Leptospira interrogans serogroup Icterohaemorrhagiae serovar copenhageni (strain Fiocruz L1-130).